The sequence spans 463 residues: V-type proton ATPase subunit S1 (463 aa).

The signal sequence occupies residues 1–32 (MMAATVVSRIRTGTRWAPVLWLLLSLVAVAAA). A propeptide spanning residues 33–225 (VAAEQQVPLV…TAVRPSRVAR (193 aa)) is cleaved from the precursor. The Lumenal segment spans residues 33-412 (VAAEQQVPLV…EQFSYASDCA (380 aa)). 8 N-linked (GlcNAc...) asparagine glycosylation sites follow: asparagine 164, asparagine 255, asparagine 267, asparagine 290, asparagine 297, asparagine 344, asparagine 351, and asparagine 399. The chain crosses the membrane as a helical span at residues 413–433 (GFFSPGIWMGLLTTLFMLFIF). Residues 434–463 (TYGLHMILSLKTMDRFDDRKGPTITLTQIV) lie on the Cytoplasmic side of the membrane.

Belongs to the vacuolar ATPase subunit S1 family. In terms of assembly, accessory component of the multisubunit proton-transporting vacuolar (V)-ATPase protein pump. Interacts (via N-terminus) with ATP6AP2 (via N-terminus). Interacts with RNASEK. Interacts with TMEM106B (via C-terminus). N-glycosylated. Expressed in brain (at protein level).

The protein resides in the endoplasmic reticulum membrane. It localises to the endoplasmic reticulum-Golgi intermediate compartment membrane. The protein localises to the cytoplasmic vesicle. Its subcellular location is the secretory vesicle. It is found in the synaptic vesicle membrane. The protein resides in the clathrin-coated vesicle membrane. In terms of biological role, accessory subunit of the proton-transporting vacuolar (V)-ATPase protein pump, which is required for luminal acidification of secretory vesicles. Guides the V-type ATPase into specialized subcellular compartments, such as neuroendocrine regulated secretory vesicles or the ruffled border of the osteoclast, thereby regulating its activity. Involved in membrane trafficking and Ca(2+)-dependent membrane fusion. May play a role in the assembly of the V-type ATPase complex. In aerobic conditions, involved in intracellular iron homeostasis, thus triggering the activity of Fe(2+) prolyl hydroxylase (PHD) enzymes, and leading to HIF1A hydroxylation and subsequent proteasomal degradation. In islets of Langerhans cells, may regulate the acidification of dense-core secretory granules. This chain is V-type proton ATPase subunit S1 (Atp6ap1), found in Rattus norvegicus (Rat).